The primary structure comprises 528 residues: Glucose-6-phosphate isomerase (528 aa).

The active-site Proton donor is Glu322. Active-site residues include His351 and Lys455.

Belongs to the GPI family.

The protein resides in the cytoplasm. It carries out the reaction alpha-D-glucose 6-phosphate = beta-D-fructose 6-phosphate. It participates in carbohydrate biosynthesis; gluconeogenesis. It functions in the pathway carbohydrate degradation; glycolysis; D-glyceraldehyde 3-phosphate and glycerone phosphate from D-glucose: step 2/4. In terms of biological role, catalyzes the reversible isomerization of glucose-6-phosphate to fructose-6-phosphate. The chain is Glucose-6-phosphate isomerase from Nostoc punctiforme (strain ATCC 29133 / PCC 73102).